The primary structure comprises 382 residues: tRNA-specific 2-thiouridylase MnmA (382 aa).

ATP-binding positions include 18–25 (AMSGGVDS) and Leu44. The Nucleophile role is filled by Cys112. Cys112 and Cys209 form a disulfide bridge. ATP is bound at residue Gly136. The tract at residues 159 to 161 (RDQ) is interaction with tRNA. Catalysis depends on Cys209, which acts as the Cysteine persulfide intermediate.

This sequence belongs to the MnmA/TRMU family.

Its subcellular location is the cytoplasm. It catalyses the reaction S-sulfanyl-L-cysteinyl-[protein] + uridine(34) in tRNA + AH2 + ATP = 2-thiouridine(34) in tRNA + L-cysteinyl-[protein] + A + AMP + diphosphate + H(+). In terms of biological role, catalyzes the 2-thiolation of uridine at the wobble position (U34) of tRNA, leading to the formation of s(2)U34. In Methylobacterium sp. (strain 4-46), this protein is tRNA-specific 2-thiouridylase MnmA.